The sequence spans 20 residues: Cytolysin tenebrosin-A (20 aa).

The tract at residues 3–12 (AVAGAVIEGA) is plays an important role in the hemolytic activity. The tract at residues 11-20 (GATLTFEVLQ) is N-terminal region.

This sequence belongs to the actinoporin family. Sea anemone subfamily. As to quaternary structure, octamer or nonamer in membranes. Monomer in the soluble state.

Its subcellular location is the secreted. It is found in the nematocyst. The protein localises to the target cell membrane. Its function is as follows. Pore-forming protein that forms cations-selective hydrophilic pores of around 1 nm and causes cardiac stimulation and cytolysis. Pore formation is a multi-step process that involves specific recognition of membrane sphingomyelin (but neither cholesterol nor phosphatidylcholine) using aromatic rich region and adjacent phosphocholine (POC) binding site, firm binding to the membrane (mainly driven by hydrophobic interactions) accompanied by the transfer of the N-terminal region to the lipid-water interface and finally pore formation after oligomerization of monomers. This chain is Cytolysin tenebrosin-A, found in Actinia tenebrosa (Australian red waratah sea anemone).